We begin with the raw amino-acid sequence, 428 residues long: 3-phosphoshikimate 1-carboxyvinyltransferase (428 aa).

Residues K23, S24, and R28 each contribute to the 3-phosphoshikimate site. K23 contributes to the phosphoenolpyruvate binding site. Phosphoenolpyruvate-binding residues include G97 and R125. 3-phosphoshikimate is bound by residues S170, S171, Q172, S198, D314, N337, and K341. Q172 is a phosphoenolpyruvate binding site. The active-site Proton acceptor is D314. R345, R387, and K412 together coordinate phosphoenolpyruvate.

Belongs to the EPSP synthase family. Monomer.

The protein resides in the cytoplasm. It catalyses the reaction 3-phosphoshikimate + phosphoenolpyruvate = 5-O-(1-carboxyvinyl)-3-phosphoshikimate + phosphate. It participates in metabolic intermediate biosynthesis; chorismate biosynthesis; chorismate from D-erythrose 4-phosphate and phosphoenolpyruvate: step 6/7. Its function is as follows. Catalyzes the transfer of the enolpyruvyl moiety of phosphoenolpyruvate (PEP) to the 5-hydroxyl of shikimate-3-phosphate (S3P) to produce enolpyruvyl shikimate-3-phosphate and inorganic phosphate. The protein is 3-phosphoshikimate 1-carboxyvinyltransferase of Serratia proteamaculans (strain 568).